The primary structure comprises 259 residues: Thiazole synthase (259 aa).

Lysine 95 acts as the Schiff-base intermediate with DXP in catalysis. Residues glycine 156, 183-184 (AG), and 205-206 (NS) each bind 1-deoxy-D-xylulose 5-phosphate.

Belongs to the ThiG family. As to quaternary structure, homotetramer. Forms heterodimers with either ThiH or ThiS.

The protein localises to the cytoplasm. It catalyses the reaction [ThiS sulfur-carrier protein]-C-terminal-Gly-aminoethanethioate + 2-iminoacetate + 1-deoxy-D-xylulose 5-phosphate = [ThiS sulfur-carrier protein]-C-terminal Gly-Gly + 2-[(2R,5Z)-2-carboxy-4-methylthiazol-5(2H)-ylidene]ethyl phosphate + 2 H2O + H(+). The protein operates within cofactor biosynthesis; thiamine diphosphate biosynthesis. In terms of biological role, catalyzes the rearrangement of 1-deoxy-D-xylulose 5-phosphate (DXP) to produce the thiazole phosphate moiety of thiamine. Sulfur is provided by the thiocarboxylate moiety of the carrier protein ThiS. In vitro, sulfur can be provided by H(2)S. The sequence is that of Thiazole synthase from Coxiella burnetii (strain CbuK_Q154) (Coxiella burnetii (strain Q154)).